The sequence spans 500 residues: FAD-linked oxidoreductase chyH (500 aa).

The N-terminal stretch at 1–20 is a signal peptide; sequence MRLQAVTAVAAWAVASACQS. The 171-residue stretch at 65 to 235 folds into the FAD-binding PCMH-type domain; that stretch reads LEVPTVNIVI…TSVTSKTYDI (171 aa). Asn199, Asn266, Asn275, and Asn383 each carry an N-linked (GlcNAc...) asparagine glycan.

Belongs to the oxygen-dependent FAD-linked oxidoreductase family. FAD is required as a cofactor.

Its pathway is pigment biosynthesis. FAD-linked oxidoreductase; part of the gene cluster that mediates the biosynthesis of the yellow pigment chrysogine. the NRPS chyA mediates the condensation of anthranilic acid and alanine into the intermediate 2-(2-aminopropanamido)benzoic acid. The remainder of the pathway is highly branched yielding at least 13 chrysogine-related compounds. The malonyl transferase chyE converts 2-(2-aminopropanamido)benzoic acid and 2-(2-aminopropanamido)benzamidine into 2-(2-(2-carboxyacetamido)propanamido)benzoic acid and 3-((1-((2-carbamoylphenyl)amino)-1-oxopropan-2-yl)amino)-3-oxopropanoic acid, respectively. ChyD is an amidase, being responsible for the amidation of the carboxylic acid moiety of 2-(2-aminopropanamido)benzoic acid, 2-(2-(2-carboxyacetamido)propanamido)benzoic acid and 2-(2-((4-amino-1-carboxy-4-oxobutyl)amino)propanamido)benzoic acid. ChyC is involved in the same reactions as ChyD, but plays a more minor role in the amidation reactions compared to chyD. The oxidoreductases chyH and chyM are involved in oxidation reactions that form N-pyruvoylanthranilamide from 2-(2-aminopropanamido)benzamidine and (1-((2-carbamoylphenyl)amino)-1-oxopropan-2-yl)glutamine, respectively. N-pyruvoylanthranilamide is further converted via two further branches in the pathway, yielding chrysogine and additional chrysogine-related coumpounds. Chrysogine is likely formed by a spontaneous ring closure from N-pyruvoylanthranilamide. This Penicillium rubens (strain ATCC 28089 / DSM 1075 / NRRL 1951 / Wisconsin 54-1255) (Penicillium chrysogenum) protein is FAD-linked oxidoreductase chyH.